Consider the following 355-residue polypeptide: MKIAVLPGDGIGPEIVTEAVKVLNALDEKFELEQAPVGGAGYEARGHPLPDATLKLAKEADAILFGAVGDWKYDSLERALRPEQAILGLRKHLELFANFRPAICYPQLVDASPLKPELVAGLDILIVRELNGDIYFGQPRGVRAAPDGPFAGEREGFDTMRYSEPEVRRIAHVAFQAAQKRAKKLLSVDKSNVLETSQFWRDIMIDVSKEYADVELSHMYVDNAAMQLAKAPKQFDVIVTGNMFGDILSDEASMLTGSIGMLPSASLDKNNKGLYEPSHGSAPDIAGKGIANPLATILSAAMLLRYSLNRAEQADRIERAVKTVLEQGYRTGDIATPGCKQVGTAAMGDAVVAAL.

Residues Arg-90, Arg-100, Arg-128, and Asp-222 each contribute to the substrate site. Positions 222, 246, and 250 each coordinate Mg(2+). NAD(+) is bound at residue Gly-280 to Asn-292.

This sequence belongs to the isocitrate and isopropylmalate dehydrogenases family. LeuB type 1 subfamily. Homodimer. Requires Mg(2+) as cofactor. Mn(2+) is required as a cofactor.

Its subcellular location is the cytoplasm. It catalyses the reaction (2R,3S)-3-isopropylmalate + NAD(+) = 4-methyl-2-oxopentanoate + CO2 + NADH. It functions in the pathway amino-acid biosynthesis; L-leucine biosynthesis; L-leucine from 3-methyl-2-oxobutanoate: step 3/4. In terms of biological role, catalyzes the oxidation of 3-carboxy-2-hydroxy-4-methylpentanoate (3-isopropylmalate) to 3-carboxy-4-methyl-2-oxopentanoate. The product decarboxylates to 4-methyl-2 oxopentanoate. This Burkholderia multivorans (strain ATCC 17616 / 249) protein is 3-isopropylmalate dehydrogenase.